A 435-amino-acid polypeptide reads, in one-letter code: D-amino acid dehydrogenase (435 aa).

3–17 (VLILGSGVIGTTSAW) is an FAD binding site.

This sequence belongs to the DadA oxidoreductase family. It depends on FAD as a cofactor.

The catalysed reaction is a D-alpha-amino acid + A + H2O = a 2-oxocarboxylate + AH2 + NH4(+). Its pathway is amino-acid degradation; D-alanine degradation; NH(3) and pyruvate from D-alanine: step 1/1. Its function is as follows. Oxidative deamination of D-amino acids. The chain is D-amino acid dehydrogenase from Xylella fastidiosa (strain M12).